We begin with the raw amino-acid sequence, 279 residues long: Tryptophan synthase alpha chain (279 aa).

Residues E63 and D74 each act as proton acceptor in the active site.

The protein belongs to the TrpA family. In terms of assembly, tetramer of two alpha and two beta chains.

It catalyses the reaction (1S,2R)-1-C-(indol-3-yl)glycerol 3-phosphate + L-serine = D-glyceraldehyde 3-phosphate + L-tryptophan + H2O. Its pathway is amino-acid biosynthesis; L-tryptophan biosynthesis; L-tryptophan from chorismate: step 5/5. In terms of biological role, the alpha subunit is responsible for the aldol cleavage of indoleglycerol phosphate to indole and glyceraldehyde 3-phosphate. This chain is Tryptophan synthase alpha chain, found in Prochlorococcus marinus subsp. pastoris (strain CCMP1986 / NIES-2087 / MED4).